The primary structure comprises 526 residues: Bifunctional purine biosynthesis protein PurH (526 aa).

In terms of domain architecture, MGS-like spans 1–147 (MPSIKRALIS…KNWKHVAIVT (147 aa)).

It belongs to the PurH family.

The enzyme catalyses (6R)-10-formyltetrahydrofolate + 5-amino-1-(5-phospho-beta-D-ribosyl)imidazole-4-carboxamide = 5-formamido-1-(5-phospho-D-ribosyl)imidazole-4-carboxamide + (6S)-5,6,7,8-tetrahydrofolate. It catalyses the reaction IMP + H2O = 5-formamido-1-(5-phospho-D-ribosyl)imidazole-4-carboxamide. The protein operates within purine metabolism; IMP biosynthesis via de novo pathway; 5-formamido-1-(5-phospho-D-ribosyl)imidazole-4-carboxamide from 5-amino-1-(5-phospho-D-ribosyl)imidazole-4-carboxamide (10-formyl THF route): step 1/1. It functions in the pathway purine metabolism; IMP biosynthesis via de novo pathway; IMP from 5-formamido-1-(5-phospho-D-ribosyl)imidazole-4-carboxamide: step 1/1. In Neisseria meningitidis serogroup C / serotype 2a (strain ATCC 700532 / DSM 15464 / FAM18), this protein is Bifunctional purine biosynthesis protein PurH.